Here is a 727-residue protein sequence, read N- to C-terminus: E3 SUMO-protein ligase pli1 (727 aa).

Positions E18–I52 constitute an SAP domain. Positions Y108–Y261 constitute a PINIT domain. The segment at Q290–S371 adopts an SP-RING-type zinc-finger fold. C321, H323, C344, and C347 together coordinate Zn(2+). 2 positions are modified to phosphoserine: S395 and S396. 2 disordered regions span residues E408–S558 and Q706–D727. Composition is skewed to polar residues over residues T417 to S435 and V459 to T494. The segment covering S546–S558 has biased composition (low complexity).

It belongs to the PIAS family. Interacts with hus5/ubc9.

The protein resides in the nucleus. It participates in protein modification; protein sumoylation. Its function is as follows. Acts as an E3 ligase mediating SUMO/Smt3 attachment to other proteins. Involved in the maintenance of the centromere and in telomere length. Regulates recombination, via extension sumoylation, particularly within the heterochromatin repeats. This Schizosaccharomyces pombe (strain 972 / ATCC 24843) (Fission yeast) protein is E3 SUMO-protein ligase pli1 (pli1).